The chain runs to 465 residues: ATP synthase subunit beta (465 aa).

152 to 159 (GGAGVGKT) contacts ATP.

The protein belongs to the ATPase alpha/beta chains family. F-type ATPases have 2 components, CF(1) - the catalytic core - and CF(0) - the membrane proton channel. CF(1) has five subunits: alpha(3), beta(3), gamma(1), delta(1), epsilon(1). CF(0) has three main subunits: a(1), b(2) and c(9-12). The alpha and beta chains form an alternating ring which encloses part of the gamma chain. CF(1) is attached to CF(0) by a central stalk formed by the gamma and epsilon chains, while a peripheral stalk is formed by the delta and b chains.

The protein localises to the cell inner membrane. It carries out the reaction ATP + H2O + 4 H(+)(in) = ADP + phosphate + 5 H(+)(out). In terms of biological role, produces ATP from ADP in the presence of a proton gradient across the membrane. The catalytic sites are hosted primarily by the beta subunits. This chain is ATP synthase subunit beta, found in Campylobacter curvus (strain 525.92).